A 447-amino-acid polypeptide reads, in one-letter code: Probable glycine dehydrogenase (decarboxylating) subunit 1 (447 aa).

It belongs to the GcvP family. N-terminal subunit subfamily. The glycine cleavage system is composed of four proteins: P, T, L and H. In this organism, the P 'protein' is a heterodimer of two subunits.

It carries out the reaction N(6)-[(R)-lipoyl]-L-lysyl-[glycine-cleavage complex H protein] + glycine + H(+) = N(6)-[(R)-S(8)-aminomethyldihydrolipoyl]-L-lysyl-[glycine-cleavage complex H protein] + CO2. Functionally, the glycine cleavage system catalyzes the degradation of glycine. The P protein binds the alpha-amino group of glycine through its pyridoxal phosphate cofactor; CO(2) is released and the remaining methylamine moiety is then transferred to the lipoamide cofactor of the H protein. This chain is Probable glycine dehydrogenase (decarboxylating) subunit 1, found in Bacillus cereus (strain G9842).